The primary structure comprises 186 residues: dCTP deaminase (186 aa).

106-111 is a dCTP binding site; sequence KSTYAR. Catalysis depends on Glu-132, which acts as the Proton donor/acceptor. DCTP-binding residues include Gln-151, Tyr-166, and Gln-176.

It belongs to the dCTP deaminase family. Homotrimer.

The enzyme catalyses dCTP + H2O + H(+) = dUTP + NH4(+). The protein operates within pyrimidine metabolism; dUMP biosynthesis; dUMP from dCTP (dUTP route): step 1/2. Catalyzes the deamination of dCTP to dUTP. The sequence is that of dCTP deaminase from Nautilia profundicola (strain ATCC BAA-1463 / DSM 18972 / AmH).